Reading from the N-terminus, the 141-residue chain is HTH-type transcriptional regulator LrpA (141 aa).

An HTH asnC-type domain is found at 2-63; sequence IDERDKIILE…RINPKKLGYS (62 aa). The segment at residues 21 to 40 is a DNA-binding region (H-T-H motif); that stretch reads FTEIAKKLGISETAVRKRVK.

In terms of assembly, homooctamer; tetramer of dimers.

Functionally, DNA-binding protein that negatively regulates its own transcription. Interferes with RNA polymerase (RNAP) recruitment by inhibiting the association of RNAP with the TBP-TFB promoter complex. This Pyrococcus horikoshii (strain ATCC 700860 / DSM 12428 / JCM 9974 / NBRC 100139 / OT-3) protein is HTH-type transcriptional regulator LrpA (lrpA).